Here is a 333-residue protein sequence, read N- to C-terminus: Methylosome protein WDR77 (333 aa).

7 WD repeats span residues 16–59 (CMEV…GAPN), 68–106 (QTEA…SLLV), 113–152 (EHDD…VLKS), 155–195 (AHSS…PATR), 199–240 (CASD…SAQT), 243–283 (VHSQ…VFRD), and 285–328 (SHRD…NLIA).

As to quaternary structure, heterotetramer; dimer of heterodimer with prmt5. Interacts with histone h2a and h4 and with nucleoplasmin. In terms of tissue distribution, detected in egg (at protein level).

It is found in the cytoplasm. Its subcellular location is the nucleus. Non-catalytic component of the 20S prmt5-containing methyltransferase complex, which modifies specific arginines to dimethylarginines in several spliceosomal Sm proteins and histones. Required for normal prmt5 methyltransferase activity. This Xenopus laevis (African clawed frog) protein is Methylosome protein WDR77.